Here is a 271-residue protein sequence, read N- to C-terminus: MASCSPPRRVSPDLLVSSELRRRNIWRRVTCVTGERGSPAVTTAVSSTRVRPAVLCGKAPVSETVDEKENGAATAGGGGVNAAVDVRRCEYSETAVRQKLDPSGNDSRCVVAAADSSTDSDGKSIIAGVQVVDHDEDIIAPQSLWCTAFKEALWDVALLEVPRWAWQGWKRWRNSESGRRWSAGSASASSLSDLAGEAVGELVGSVVAYVILERLWLAARGWVCETGVEAEEAMARRRQRMLWRMFSRGGDGECSRRCSMEMACEEESAVL.

This is an uncharacterized protein from Human cytomegalovirus (strain Merlin) (HHV-5).